The following is a 187-amino-acid chain: Shikimate kinase (187 aa).

14–19 (TSGKST) serves as a coordination point for ATP. Ser18 provides a ligand contact to Mg(2+). Residues Asp36, Arg60, and Gly82 each contribute to the substrate site. An ATP-binding site is contributed by Arg120. Residue Arg147 participates in substrate binding.

The protein belongs to the shikimate kinase family. Monomer. Requires Mg(2+) as cofactor.

The protein localises to the cytoplasm. It carries out the reaction shikimate + ATP = 3-phosphoshikimate + ADP + H(+). The protein operates within metabolic intermediate biosynthesis; chorismate biosynthesis; chorismate from D-erythrose 4-phosphate and phosphoenolpyruvate: step 5/7. In terms of biological role, catalyzes the specific phosphorylation of the 3-hydroxyl group of shikimic acid using ATP as a cosubstrate. In Chloroherpeton thalassium (strain ATCC 35110 / GB-78), this protein is Shikimate kinase.